Reading from the N-terminus, the 198-residue chain is Ribonuclease HII (198 aa).

The region spanning 14–198 is the RNase H type-2 domain; sequence GVIAGVDEVG…RNFAPISRAL (185 aa). Residues Asp20, Glu21, and Asp112 each contribute to the a divalent metal cation site.

It belongs to the RNase HII family. The cofactor is Mn(2+). Mg(2+) is required as a cofactor.

It localises to the cytoplasm. The enzyme catalyses Endonucleolytic cleavage to 5'-phosphomonoester.. Functionally, endonuclease that specifically degrades the RNA of RNA-DNA hybrids. The chain is Ribonuclease HII from Wolbachia sp. subsp. Drosophila simulans (strain wRi).